A 195-amino-acid chain; its full sequence is dITP/XTP pyrophosphatase (195 aa).

Substrate is bound at residue 8-13 (TNNQGK). Residues glutamate 39 and aspartate 68 each coordinate Mg(2+). The active-site Proton acceptor is aspartate 68. Substrate contacts are provided by residues serine 69, 149–152 (FGYD), lysine 172, and 177–178 (HR).

It belongs to the HAM1 NTPase family. Homodimer. Mg(2+) serves as cofactor.

It catalyses the reaction XTP + H2O = XMP + diphosphate + H(+). The catalysed reaction is dITP + H2O = dIMP + diphosphate + H(+). The enzyme catalyses ITP + H2O = IMP + diphosphate + H(+). Functionally, pyrophosphatase that catalyzes the hydrolysis of nucleoside triphosphates to their monophosphate derivatives, with a high preference for the non-canonical purine nucleotides XTP (xanthosine triphosphate), dITP (deoxyinosine triphosphate) and ITP. Seems to function as a house-cleaning enzyme that removes non-canonical purine nucleotides from the nucleotide pool, thus preventing their incorporation into DNA/RNA and avoiding chromosomal lesions. This chain is dITP/XTP pyrophosphatase, found in Staphylococcus epidermidis (strain ATCC 12228 / FDA PCI 1200).